Consider the following 251-residue polypeptide: uncharacterized protein (251 aa).

This is an uncharacterized protein from Haemophilus influenzae (strain ATCC 51907 / DSM 11121 / KW20 / Rd).